We begin with the raw amino-acid sequence, 205 residues long: GTP cyclohydrolase-2 (205 aa).

Residue 49–53 (RLHSE) participates in GTP binding. Zn(2+) contacts are provided by cysteine 54, cysteine 65, and cysteine 67. GTP is bound by residues glutamine 70, 92–94 (EGR), and threonine 114. Catalysis depends on aspartate 126, which acts as the Proton acceptor. Arginine 128 serves as the catalytic Nucleophile. Residues threonine 149 and lysine 154 each contribute to the GTP site.

This sequence belongs to the GTP cyclohydrolase II family. Zn(2+) is required as a cofactor.

It catalyses the reaction GTP + 4 H2O = 2,5-diamino-6-hydroxy-4-(5-phosphoribosylamino)-pyrimidine + formate + 2 phosphate + 3 H(+). It participates in cofactor biosynthesis; riboflavin biosynthesis; 5-amino-6-(D-ribitylamino)uracil from GTP: step 1/4. Its function is as follows. Catalyzes the conversion of GTP to 2,5-diamino-6-ribosylamino-4(3H)-pyrimidinone 5'-phosphate (DARP), formate and pyrophosphate. This is GTP cyclohydrolase-2 from Pseudomonas putida (strain ATCC 700007 / DSM 6899 / JCM 31910 / BCRC 17059 / LMG 24140 / F1).